We begin with the raw amino-acid sequence, 172 residues long: Gastrula zinc finger protein XlCGF51.1A (172 aa).

C2H2-type zinc fingers lie at residues 6 to 28 (FSCS…NKIH), 34 to 56 (LICS…QRSH), 62 to 84 (FSCT…QRTH), 90 to 112 (FSCT…MLKH), 122 to 144 (LDCS…RKSH), and 150 to 172 (LQCS…QRVH).

Belongs to the krueppel C2H2-type zinc-finger protein family.

It is found in the nucleus. Functionally, may be involved in transcriptional regulation. The sequence is that of Gastrula zinc finger protein XlCGF51.1A from Xenopus laevis (African clawed frog).